Consider the following 410-residue polypeptide: Adenosine receptor A2a (410 aa).

The Extracellular portion of the chain corresponds to 1-4 (MGSS). A helical membrane pass occupies residues 5 to 29 (VYIMVELAIAVLAILGNVLVCWAVW). Residues 30–39 (INSNLQNVTN) are Cytoplasmic-facing. The helical transmembrane segment at 40–63 (FFVVSLAAADIAVGVLAIPFAITI) threads the bilayer. Residues 64-74 (STGFCAACHGC) are Extracellular-facing. 3 disulfides stabilise this stretch: cysteine 68/cysteine 154, cysteine 71/cysteine 143, and cysteine 74/cysteine 161. A helical membrane pass occupies residues 75 to 97 (LFFACFVLVLTQSSIFSLLAIAI). Over 98-117 (DRYIAIRIPLRYNGLVTGMR) the chain is Cytoplasmic. A helical transmembrane segment spans residues 118–140 (AKGIIAICWVLSFAIGLTPMLGW). Over 141–168 (NNCSQKDENSTKTCGEGRVTCLFEDVVP) the chain is Extracellular. Asparagine 142 and asparagine 149 each carry an N-linked (GlcNAc...) asparagine glycan. Glutamate 164 contacts adenosine. The chain crosses the membrane as a helical span at residues 169 to 193 (MNYMVYYNFFAFVLLPLLLMLAIYL). Over 194–229 (RIFLAARRQLKQMESQPLPGERTRSTLQKEVHAAKS) the chain is Cytoplasmic. Residues 230-253 (LAIIVGLFALCWLPLHIINCFTFF) traverse the membrane as a helical segment. Residue asparagine 248 participates in adenosine binding. A disulfide bridge links cysteine 254 with cysteine 257. The Extracellular segment spans residues 254–261 (CSTCQHAP). The helical transmembrane segment at 262 to 285 (PWLMYLAIILSHSNSVVNPFIYAY) threads the bilayer. Positions 272 and 273 each coordinate adenosine. Topologically, residues 286–410 (RIREFRQTFR…ASWSSEFAPS (125 aa)) are cytoplasmic. The segment at 322–410 (HSTEGEQVSL…ASWSSEFAPS (89 aa)) is interaction with GAS2L2. The disordered stretch occupies residues 342–410 (ANGSAPHSGR…ASWSSEFAPS (69 aa)). Positions 377–389 (TQEHQEGQEHPGL) are enriched in basic and acidic residues. Over residues 401-410 (ASWSSEFAPS) the composition is skewed to polar residues.

It belongs to the G-protein coupled receptor 1 family. Interacts (via cytoplasmic C-terminal domain) with USP4; the interaction is direct. May interact with DRD4. Interacts with NECAB2. Interacts (via cytoplasmic C-terminal domain) with GAS2L2; interaction enhances receptor-mediated adenylyl cyclase activity. Post-translationally, ubiquitinated. Deubiquitinated by USP4; leading to stabilization and expression at the cell surface.

The protein resides in the cell membrane. In terms of biological role, receptor for adenosine. The activity of this receptor is mediated by G proteins which activate adenylyl cyclase. This Mus musculus (Mouse) protein is Adenosine receptor A2a (Adora2a).